Reading from the N-terminus, the 604-residue chain is Inositol-3-phosphate synthase 1 (604 aa).

The NAD(+) site is built by glycine 88, glycine 89, asparagine 90, asparagine 91, aspartate 163, serine 198, valine 199, glutamine 210, arginine 213, serine 251, glycine 252, asparagine 253, threonine 254, serine 303, aspartate 327, leucine 328, threonine 330, asparagine 361, asparagine 362, aspartate 363, lysine 376, glycine 456, aspartate 457, aspartate 485, and serine 486.

The protein belongs to the myo-inositol 1-phosphate synthase family. NAD(+) is required as a cofactor.

It catalyses the reaction D-glucose 6-phosphate = 1D-myo-inositol 3-phosphate. The protein operates within polyol metabolism; myo-inositol biosynthesis; myo-inositol from D-glucose 6-phosphate: step 1/2. Key enzyme in myo-inositol biosynthesis pathway that catalyzes the conversion of glucose 6-phosphate to 1-myo-inositol 1-phosphate in a NAD-dependent manner. Rate-limiting enzyme in the synthesis of all inositol-containing compounds. De novo-synthesized myo-inositol is essential for incorporation into GPI (glycosylphosphatidylinositol) glycolipids during intra-erythrocytic development. This is Inositol-3-phosphate synthase 1 from Plasmodium falciparum (isolate 3D7).